The chain runs to 95 residues: MKIRPLNDRLLVKRLAEEEKTAGGIIIPDSAKEKPAEGQVVAVGPGKVSDSGERVALQVKEGDLVLFSKYGGTDVKLDGEDFLIMREDDILGIME.

This sequence belongs to the GroES chaperonin family. In terms of assembly, heptamer of 7 subunits arranged in a ring. Interacts with the chaperonin GroEL.

The protein resides in the cytoplasm. In terms of biological role, together with the chaperonin GroEL, plays an essential role in assisting protein folding. The GroEL-GroES system forms a nano-cage that allows encapsulation of the non-native substrate proteins and provides a physical environment optimized to promote and accelerate protein folding. GroES binds to the apical surface of the GroEL ring, thereby capping the opening of the GroEL channel. The chain is Co-chaperonin GroES from Desulfotalea psychrophila (strain LSv54 / DSM 12343).